The chain runs to 306 residues: [methyl-Co(III) glycine betaine-specific corrinoid protein]--tetrahydrofolate methyltransferase (306 aa).

It belongs to the MtrH family.

The enzyme catalyses methyl-Co(III)-[glycine betaine-specific corrinoid protein] + (6S)-5,6,7,8-tetrahydrofolate = Co(I)-[glycine betaine-specific corrinoid protein] + (6S)-5-methyl-5,6,7,8-tetrahydrofolate + H(+). In terms of biological role, methyltransferase able to catalyze the transfer of a methyl group from methylcobalamin (methylCbl) to tetrahydrofolate (THF) in vitro, to generate methyl-THF and cob(I)alamin. In vivo, the methyl group probably comes from the adjacently encoded methylated corrinoid protein DSY3155. The methyl group may then be ultimately converted to carbon dioxide, and its oxidation would also provide reducing equivalents for anaerobic respiration. Thus, may function in the pathway that allows anaerobic methylotrophic growth of D.hafniense using glycine betaine. The protein is [methyl-Co(III) glycine betaine-specific corrinoid protein]--tetrahydrofolate methyltransferase of Desulfitobacterium hafniense (strain Y51).